Here is a 220-residue protein sequence, read N- to C-terminus: Fructose-6-phosphate aldolase (220 aa).

K85 serves as the catalytic Schiff-base intermediate with substrate.

The protein belongs to the transaldolase family. Type 3A subfamily. As to quaternary structure, homodecamer.

It is found in the cytoplasm. The catalysed reaction is beta-D-fructose 6-phosphate = dihydroxyacetone + D-glyceraldehyde 3-phosphate. Its function is as follows. Catalyzes the reversible formation of fructose 6-phosphate from dihydroxyacetone and D-glyceraldehyde 3-phosphate via an aldolization reaction. The protein is Fructose-6-phosphate aldolase of Enterobacter sp. (strain 638).